We begin with the raw amino-acid sequence, 145 residues long: Transcription antitermination protein NusB (145 aa).

The protein belongs to the NusB family.

Involved in transcription antitermination. Required for transcription of ribosomal RNA (rRNA) genes. Binds specifically to the boxA antiterminator sequence of the ribosomal RNA (rrn) operons. In Geobacter sp. (strain M21), this protein is Transcription antitermination protein NusB.